A 473-amino-acid chain; its full sequence is MKTLYSLRRSYPVETLFNGTIALAGRDQETTGFAWWAGNARLINLSGKLLGAHVAHAGLIVFWAGAMNLFEVAHFVPEKPMYEQGLILLPHLATLGWGVGPGGEIVDTFPYFVSGVLHLISSAVLGFGGIYHALIGPETLEESFPFFGYVWKDRNKMTTILGIHLILLGVGAFLPVLKALYFGGVYDTWAPGGGDVRKITNPTLNPSAIFGYLLKSPFGGEGWIVSVDNLEDVIGGHVWLGSICIFGGIWHILTKPFAWARRAFVWSGEAYLSYSLAALSLFGFIACCFVWFNNTVYPSEFYGPTGPEASQAQAFTFLVRDQRLGASVGSAQGPTGLGKYLMRSPTGEIIFGGETMRFWDLRAPWLEPLRGPNGLDLSKLKKDIQPWQERRSAEYMTHAPLGSLNSVGGVATEINAVNYVSPRSWLSTSHFVLGFFFFVGHLWHAGRARAAAAGFEKGIDRDFEPVLSMTPLN.

Positions 1-14 (MKTLYSLRRSYPVE) are excised as a propeptide. Thr15 is modified (N-acetylthreonine). Phosphothreonine is present on Thr15. The next 5 helical transmembrane spans lie at 69-93 (LFEV…PHLA), 134-155 (LIGP…KDRN), 178-200 (KALY…RKIT), 255-275 (KPFA…LSYS), and 291-312 (WFNN…ASQA). Glu367 contributes to the [CaMn4O5] cluster binding site. Residues 447–471 (RARAAAAGFEKGIDRDFEPVLSMTP) form a helical membrane-spanning segment.

This sequence belongs to the PsbB/PsbC family. PsbC subfamily. In terms of assembly, PSII is composed of 1 copy each of membrane proteins PsbA, PsbB, PsbC, PsbD, PsbE, PsbF, PsbH, PsbI, PsbJ, PsbK, PsbL, PsbM, PsbT, PsbX, PsbY, PsbZ, Psb30/Ycf12, at least 3 peripheral proteins of the oxygen-evolving complex and a large number of cofactors. It forms dimeric complexes. Binds multiple chlorophylls and provides some of the ligands for the Ca-4Mn-5O cluster of the oxygen-evolving complex. It may also provide a ligand for a Cl- that is required for oxygen evolution. PSII binds additional chlorophylls, carotenoids and specific lipids. is required as a cofactor.

It localises to the plastid. The protein resides in the chloroplast thylakoid membrane. Functionally, one of the components of the core complex of photosystem II (PSII). It binds chlorophyll and helps catalyze the primary light-induced photochemical processes of PSII. PSII is a light-driven water:plastoquinone oxidoreductase, using light energy to abstract electrons from H(2)O, generating O(2) and a proton gradient subsequently used for ATP formation. The chain is Photosystem II CP43 reaction center protein from Pinus koraiensis (Korean pine).